A 422-amino-acid chain; its full sequence is MKCKVEKSKISGQIVCPSNKSYTHRAIFLASLAGNGSKVENVLLSADTMATVEACKKFGASIEIENSSIIVKNPIKFDKIVPEINTENSGTTIRIASGIASLFSEEITLTGDESLQKRPMQPLLDALSSIGAQCQSTDGKPPIKITGKISGGDVTIPGNFSSQFISALLISAPLTEKGINLSIKDNLVSKPYLDATIATMRKFGVSVQTLIPYKRYNISPQVYNAATFTVPIDFSSLALLLSAAVLNGDETVIKGNIGNLPQGDEVFIDILEQLGVTVNIGEDEIKIKSPEKLKGGRFDLSNSPDLLPPLTILALNSENPIEIVNVKHARLKETDRIAITSRELVKLGIKVQENEDGLILESTENLTGAELNSENDHRLFMAFCIAGMYVGNCVVTDPESVQVSYPDFVEEMNRIGARIQPE.

Residues Lys-20, Ser-21, and Arg-25 each contribute to the 3-phosphoshikimate site. Residue Lys-20 coordinates phosphoenolpyruvate. Residues Gly-90 and Arg-118 each coordinate phosphoenolpyruvate. Ser-161, Ser-162, Gln-163, Ser-189, Asp-305, and Lys-332 together coordinate 3-phosphoshikimate. Gln-163 lines the phosphoenolpyruvate pocket. Asp-305 (proton acceptor) is an active-site residue. Positions 336 and 378 each coordinate phosphoenolpyruvate.

The protein belongs to the EPSP synthase family. Monomer.

It localises to the cytoplasm. The enzyme catalyses 3-phosphoshikimate + phosphoenolpyruvate = 5-O-(1-carboxyvinyl)-3-phosphoshikimate + phosphate. It participates in metabolic intermediate biosynthesis; chorismate biosynthesis. Functionally, catalyzes the transfer of the enolpyruvyl moiety of phosphoenolpyruvate (PEP) to the 5-hydroxyl of shikimate-3-phosphate (S3P) to produce enolpyruvyl shikimate-3-phosphate and inorganic phosphate. This chain is 3-phosphoshikimate 1-carboxyvinyltransferase, found in Nitrosopumilus maritimus (strain SCM1).